The sequence spans 1313 residues: MGNINSIQTKNYIKFEKYYYAGDLNVDNLPHGRGLMLYENGNSFFGHFINGKKHGKGIYIDKNLTKYISKWKYDHISNKVKVKQFDSDIVYLFYYKNGLIDHCKVYEYISNKKKKKKKKNDGILEDSEIQNRSINFEKDNIMIIQNCQEKSIVNKKEEIIDIPNNKYNENDDTDKVDNFSKKINLEQSQNNMLKYKKKKTFDEMNSLNDSIFCSSCESTSKSIGSDYISHFEKKEKQINKQEDELKKSKENYMNHSEYSNSSTNFENNKIKDISDESIMLRLKNIINNNTDLKIENYELWNKEQVAQWLSLCNVPMKWALSVYKNNINGQRLNNLNLYFIRNKLGILSYGQAIKFLQLIKNLRVTAYNTRFSNTLNLEEYEIYLKKKMKKKKMRENKDGEYTATTSSQAEDFQKNNQKIIMNQIKSMIDQKNDDDKSFSDKIKNGFFKGNTNIRNLQNLVINSIWNKSKDEFKIPIDENNVPMNIEKGKELNTNDQITGKKKKKLKNKYINHIQKNISMLKKLNNASNESQSSNESVTQILSTSSESSFANIHSGLSSKMLFHDKLEPEPIKPNKEKEENNPNLSPIINSKNETNLLNDSNPTKLQDELPKSPCSIDSESSSEKSSETSSETSSFCSEHSEFANFHNNNKIVKYSNNIYINSSLAFSYIYSFIIPPENLTFLYQIRNYYVRDVENDLNPNNELDFCDSFNFYKNCEIIKNRIINPGIRNCSYASNHSKFQQNKNRKYFNYSDCKNERKKTKPQKMKSRVFRGRYMGKDVAIKVLVGNIKNFTKFHKVLYKLYILRHTNIALIMGVSISYPFVFIIYEYIKNLCLFSYLHCVKYKHIYVSKLLKYYQKKFINQNFQQQNNTMSSDRKYISNDDNEKINFDSRNILRNKLLEIKCKNNAKNKITEKNNLKDEQIYSSSTSIKSLDTSSSNMNNTKLKNINFNKNRYINKIHSMFRNKNNILCGNYYYLFRKKKNNISISHEHKNSDRTIFTNESQNLLKNKISQKKINKKLNFKAKIKINRPYAFPPLQEDFNFYLEKKKKKKKILFSYLKTHSYFKSKKCDSRKNKLSDHQIMKIIMDITLACSYLEKQKVRWINLKPTNILLDGSLNAKISDFGIKEIEQCLDINIDYSYIVFPNNVIKFNNKHFKNKIKKIKIVNKGSEDMLHVFSSKNHIYKYNTREINVSSNTHNSSVFFWTSPEILKGKQSPSLYSDVYAYGIILWELMTNSVPFNYRFKSHLLASVGYAKESLPFQNIPPFIKNLIKSCINRNKYKRPTFDRILIEISMIYEQINPKEEDALMSFMDG.

MORN repeat units lie at residues 20 to 42 (YAGDLNVDNLPHGRGLMLYENGN) and 45 to 63 (FGHFINGKKHGKGIYIDKN). N-linked (GlcNAc...) asparagine glycans are attached at residues Asn-63, Asn-131, Asn-178, Asn-208, Asn-254, Asn-260, and Asn-288. The region spanning 300 to 365 (WNKEQVAQWL…LQLIKNLRVT (66 aa)) is the SAM domain. 5 N-linked (GlcNAc...) asparagine glycosylation sites follow: Asn-466, Asn-516, Asn-525, Asn-528, and Asn-534. Residues 569–580 (EPIKPNKEKEEN) are compositionally biased toward basic and acidic residues. Residues 569-631 (EPIKPNKEKE…SEKSSETSSE (63 aa)) form a disordered region. Residues 586 to 604 (PIINSKNETNLLNDSNPTK) show a composition bias toward polar residues. Asn-592, Asn-598, Asn-661, Asn-678, Asn-729, Asn-735, and Asn-749 each carry an N-linked (GlcNAc...) asparagine glycan. Lys-782 contacts ATP. N-linked (GlcNAc...) asparagine glycans are attached at residues Asn-790, Asn-868, Asn-940, Asn-983, and Asn-1000. The Protein kinase domain occupies 962–1294 (FRNKNNILCG…FDRILIEISM (333 aa)). The RVxF motif signature appears at 1052–1055 (KILF). N-linked (GlcNAc...) asparagine glycans are attached at residues Asn-1191 and Asn-1198.

It belongs to the protein kinase superfamily. TKL Ser/Thr protein kinase family.

Its subcellular location is the parasitophorous vacuole. It is found in the host cell membrane. It localises to the host cytoplasm. The protein localises to the host cytoskeleton. This is Inactive protein tyrosine kinase pTKL from Plasmodium berghei (strain Anka).